The following is a 410-amino-acid chain: Protein CNPPD1 (410 aa).

The helical transmembrane segment at 233 to 253 threads the bilayer; sequence CLLAVAYVSSVALAVASVAVI.

This sequence belongs to the CNPPD1 family.

It is found in the membrane. In Pongo abelii (Sumatran orangutan), this protein is Protein CNPPD1 (CNPPD1).